The chain runs to 55 residues: ATP synthase F(0) complex subunit 8 (55 aa).

The chain crosses the membrane as a helical span at residues 7–24 (NPWFYIMLMSWLTFSLII). The segment at 35 to 55 (NPPSNKTSTTTRTLPWTWPWT) is disordered. The span at 41–55 (TSTTTRTLPWTWPWT) shows a compositional bias: low complexity.

This sequence belongs to the ATPase protein 8 family. Component of the ATP synthase complex composed at least of ATP5F1A/subunit alpha, ATP5F1B/subunit beta, ATP5MC1/subunit c (homooctomer), MT-ATP6/subunit a, MT-ATP8/subunit 8, ATP5ME/subunit e, ATP5MF/subunit f, ATP5MG/subunit g, ATP5MK/subunit k, ATP5MJ/subunit j, ATP5F1C/subunit gamma, ATP5F1D/subunit delta, ATP5F1E/subunit epsilon, ATP5PF/subunit F6, ATP5PB/subunit b, ATP5PD/subunit d, ATP5PO/subunit OSCP. ATP synthase complex consists of a soluble F(1) head domain (subunits alpha(3) and beta(3)) - the catalytic core - and a membrane F(0) domain - the membrane proton channel (subunits c, a, 8, e, f, g, k and j). These two domains are linked by a central stalk (subunits gamma, delta, and epsilon) rotating inside the F1 region and a stationary peripheral stalk (subunits F6, b, d, and OSCP).

Its subcellular location is the mitochondrion membrane. In terms of biological role, subunit 8, of the mitochondrial membrane ATP synthase complex (F(1)F(0) ATP synthase or Complex V) that produces ATP from ADP in the presence of a proton gradient across the membrane which is generated by electron transport complexes of the respiratory chain. ATP synthase complex consist of a soluble F(1) head domain - the catalytic core - and a membrane F(1) domain - the membrane proton channel. These two domains are linked by a central stalk rotating inside the F(1) region and a stationary peripheral stalk. During catalysis, ATP synthesis in the catalytic domain of F(1) is coupled via a rotary mechanism of the central stalk subunits to proton translocation. In vivo, can only synthesize ATP although its ATP hydrolase activity can be activated artificially in vitro. Part of the complex F(0) domain. The protein is ATP synthase F(0) complex subunit 8 of Corythaixoides concolor (Grey go-away-bird).